The following is a 233-amino-acid chain: Large ribosomal subunit protein uL1 (233 aa).

Belongs to the universal ribosomal protein uL1 family. Part of the 50S ribosomal subunit.

Its function is as follows. Binds directly to 23S rRNA. The L1 stalk is quite mobile in the ribosome, and is involved in E site tRNA release. In terms of biological role, protein L1 is also a translational repressor protein, it controls the translation of the L11 operon by binding to its mRNA. The sequence is that of Large ribosomal subunit protein uL1 from Hamiltonella defensa subsp. Acyrthosiphon pisum (strain 5AT).